A 366-amino-acid chain; its full sequence is Growth hormone secretagogue receptor type 1 (366 aa).

Residues 1–40 (MWNATPSEEPGFNLTLADLDWDASPGNDSLGDELLQLFPA) are Extracellular-facing. N-linked (GlcNAc...) asparagine glycosylation is found at asparagine 13 and asparagine 27. The helical transmembrane segment at 41 to 66 (PLLAGVTATCVALFVVGIAGNLLTML) threads the bilayer. Over 67–72 (VVSRFR) the chain is Cytoplasmic. The helical transmembrane segment at 73 to 96 (ELRTTTNLYLSSMAFSDLLIFLCM) threads the bilayer. Residues 97-117 (PLDLVRLWQYRPWNFGDLLCK) lie on the Extracellular side of the membrane. A disulfide bond links cysteine 116 and cysteine 198. A helical transmembrane segment spans residues 118-139 (LFQFVSESCTYATVLTITALSV). Residues 140–162 (ERYFAICFPLRAKVVVTKGRVKL) lie on the Cytoplasmic side of the membrane. A helical transmembrane segment spans residues 163–183 (VIFVIWAVAFCSAGPIFVLVG). Residues 184–211 (VEHENGTDPWDTNECRPTEFAVRSGLLT) are Extracellular-facing. A helical membrane pass occupies residues 212–235 (VMVWVSSIFFFLPVFCLTVLYSLI). Topologically, residues 236–263 (GRKLWRRRRGDAVVGASLRDQNHKQTVK) are cytoplasmic. A helical membrane pass occupies residues 264–285 (MLAVVVFAFILCWLPFHVGRYL). The Extracellular portion of the chain corresponds to 286–302 (FSKSFEPGSLEIAQISQ). A helical membrane pass occupies residues 303-326 (YCNLVSFVLFYLSAAINPILYNIM). Over 327–366 (SKKYRVAVFRLLGFEPFSQRKLSTLKDESSRAWTESSINT) the chain is Cytoplasmic.

It belongs to the G-protein coupled receptor 1 family. As to expression, pituitary and hypothalamus.

The protein localises to the cell membrane. Its function is as follows. Receptor for ghrelin, coupled to G-alpha-11 proteins. Stimulates growth hormone secretion. Also binds other growth hormone releasing peptides (GHRP) (e.g. Met-enkephalin and GHRP-6) as well as non-peptide, low molecular weight secretagogues (e.g. L-692,429, MK-0677, adenosine). This Homo sapiens (Human) protein is Growth hormone secretagogue receptor type 1 (GHSR).